A 317-amino-acid chain; its full sequence is SWI/SNF-related matrix-associated actin-dependent regulator of chromatin subfamily E member 1-related (317 aa).

Residues 1–17 show a composition bias toward low complexity; that stretch reads MSHGPKQPGAAAAPAGG. The disordered stretch occupies residues 1 to 71; sequence MSHGPKQPGA…RKKILPNGPK (71 aa). K31 participates in a covalent cross-link: Glycyl lysine isopeptide (Lys-Gly) (interchain with G-Cter in SUMO2). Residues 31 to 52 show a composition bias toward basic and acidic residues; it reads KQERGEGPRAGEKGSHEEEPVK. Residues 53–65 are compositionally biased toward basic residues; sequence KRGWPKGKKRKKI. A DNA-binding region (HMG box) is located at residues 70 to 138; it reads PKAPVTGYVR…QYMKELRAYQ (69 aa). S160 carries the phosphoserine modification. Residues 190–257 are a coiled coil; it reads EEFLDQNKAR…LQQQLQAVRQ (68 aa).

In terms of assembly, component of a BHC histone deacetylase complex that contains HDAC1, HDAC2, HMG20B/BRAF35, KDM1A, RCOR1/CoREST and PHF21A/BHC80. The BHC complex may also contain ZMYM2, ZNF217, ZMYM3, GSE1 and GTF2I. Interacts with the BRCA2 tumor suppressor protein. Interacts with DTNB. In terms of tissue distribution, ubiquitously expressed in adult tissues.

It localises to the nucleus. Its subcellular location is the chromosome. Its function is as follows. Required for correct progression through G2 phase of the cell cycle and entry into mitosis. Required for RCOR1/CoREST mediated repression of neuronal specific gene promoters. The protein is SWI/SNF-related matrix-associated actin-dependent regulator of chromatin subfamily E member 1-related (HMG20B) of Homo sapiens (Human).